Reading from the N-terminus, the 189-residue chain is Peptidyl-tRNA hydrolase (189 aa).

Position 15 (Y15) interacts with tRNA. H20 serves as the catalytic Proton acceptor. TRNA-binding residues include F64 and N66.

This sequence belongs to the PTH family. Monomer.

It localises to the cytoplasm. The enzyme catalyses an N-acyl-L-alpha-aminoacyl-tRNA + H2O = an N-acyl-L-amino acid + a tRNA + H(+). Its function is as follows. Hydrolyzes ribosome-free peptidyl-tRNAs (with 1 or more amino acids incorporated), which drop off the ribosome during protein synthesis, or as a result of ribosome stalling. Catalyzes the release of premature peptidyl moieties from peptidyl-tRNA molecules trapped in stalled 50S ribosomal subunits, and thus maintains levels of free tRNAs and 50S ribosomes. The polypeptide is Peptidyl-tRNA hydrolase (Persephonella marina (strain DSM 14350 / EX-H1)).